We begin with the raw amino-acid sequence, 109 residues long: Ribonuclease (109 aa).

Glu72 (proton acceptor) is an active-site residue. His101 serves as the catalytic Proton donor.

This sequence belongs to the ribonuclease N1/T1 family.

The protein localises to the secreted. Its function is as follows. Hydrolyzes phosphodiester bonds in RNA, poly- and oligoribonucleotides resulting in 3'-nucleoside monophosphates via 2',3'-cyclophosphate intermediates. The sequence is that of Ribonuclease from Heyndrickxia coagulans (Weizmannia coagulans).